The primary structure comprises 396 residues: Carbamoyl phosphate synthase small chain (396 aa).

Residues 1-204 (MTQHDNDPAW…WDKGFGQQDK (204 aa)) are CPSase. The L-glutamine site is built by serine 59, glycine 256, and glycine 258. The Glutamine amidotransferase type-1 domain occupies 208–396 (NVVAIDYGIK…AELMRQKKSA (189 aa)). The active-site Nucleophile is the cysteine 285. Leucine 286, glutamine 289, asparagine 327, glycine 329, and phenylalanine 330 together coordinate L-glutamine. Residues histidine 369 and glutamate 371 contribute to the active site.

It belongs to the CarA family. In terms of assembly, composed of two chains; the small (or glutamine) chain promotes the hydrolysis of glutamine to ammonia, which is used by the large (or ammonia) chain to synthesize carbamoyl phosphate. Tetramer of heterodimers (alpha,beta)4.

It catalyses the reaction hydrogencarbonate + L-glutamine + 2 ATP + H2O = carbamoyl phosphate + L-glutamate + 2 ADP + phosphate + 2 H(+). The enzyme catalyses L-glutamine + H2O = L-glutamate + NH4(+). It participates in amino-acid biosynthesis; L-arginine biosynthesis; carbamoyl phosphate from bicarbonate: step 1/1. It functions in the pathway pyrimidine metabolism; UMP biosynthesis via de novo pathway; (S)-dihydroorotate from bicarbonate: step 1/3. Its function is as follows. Small subunit of the glutamine-dependent carbamoyl phosphate synthetase (CPSase). CPSase catalyzes the formation of carbamoyl phosphate from the ammonia moiety of glutamine, carbonate, and phosphate donated by ATP, constituting the first step of 2 biosynthetic pathways, one leading to arginine and/or urea and the other to pyrimidine nucleotides. The small subunit (glutamine amidotransferase) binds and cleaves glutamine to supply the large subunit with the substrate ammonia. The polypeptide is Carbamoyl phosphate synthase small chain (Bradyrhizobium diazoefficiens (strain JCM 10833 / BCRC 13528 / IAM 13628 / NBRC 14792 / USDA 110)).